Here is a 254-residue protein sequence, read N- to C-terminus: Nickel import ATP-binding protein NikD (254 aa).

One can recognise an ABC transporter domain in the interval 2–241 (PQQIELRNIA…PKHAVTRSLV (240 aa)). ATP is bound at residue 36-43 (GGSGSGKS).

It belongs to the ABC transporter superfamily. Nickel importer (TC 3.A.1.5.3) family. The complex is composed of two ATP-binding proteins (NikD and NikE), two transmembrane proteins (NikB and NikC) and a solute-binding protein (NikA).

It localises to the cell inner membrane. The enzyme catalyses Ni(2+)(out) + ATP + H2O = Ni(2+)(in) + ADP + phosphate + H(+). In terms of biological role, part of the ABC transporter complex NikABCDE involved in nickel import. Responsible for energy coupling to the transport system. The protein is Nickel import ATP-binding protein NikD of Escherichia coli (strain UTI89 / UPEC).